A 264-amino-acid polypeptide reads, in one-letter code: 3-methyl-2-oxobutanoate hydroxymethyltransferase (264 aa).

Mg(2+) is bound by residues Asp-45 and Asp-84. 3-methyl-2-oxobutanoate-binding positions include 45–46 (DS), Asp-84, and Lys-112. Residue Glu-114 coordinates Mg(2+). Glu-181 functions as the Proton acceptor in the catalytic mechanism.

It belongs to the PanB family. As to quaternary structure, homodecamer; pentamer of dimers. Requires Mg(2+) as cofactor.

The protein resides in the cytoplasm. The catalysed reaction is 3-methyl-2-oxobutanoate + (6R)-5,10-methylene-5,6,7,8-tetrahydrofolate + H2O = 2-dehydropantoate + (6S)-5,6,7,8-tetrahydrofolate. Its pathway is cofactor biosynthesis; (R)-pantothenate biosynthesis; (R)-pantoate from 3-methyl-2-oxobutanoate: step 1/2. Its function is as follows. Catalyzes the reversible reaction in which hydroxymethyl group from 5,10-methylenetetrahydrofolate is transferred onto alpha-ketoisovalerate to form ketopantoate. The polypeptide is 3-methyl-2-oxobutanoate hydroxymethyltransferase (Colwellia psychrerythraea (strain 34H / ATCC BAA-681) (Vibrio psychroerythus)).